A 111-amino-acid polypeptide reads, in one-letter code: HTH-type transcriptional regulator SinR (111 aa).

The HTH cro/C1-type domain maps to 6-61 (IKQYRKEKGYSLSELAEKAGVAKSYLSSIERNLQTNPSIQFLEKVSAVLDVSVHTL). Residues 17-36 (LSELAEKAGVAKSYLSSIER) constitute a DNA-binding region (H-T-H motif). In terms of domain architecture, Sin spans 65 to 103 (KDETEYDGQLDSEWENLVRDAMASGVSKKQFREFLDYQK).

In terms of assembly, homotetramer. Also associates with SinI.

In terms of biological role, affects autolysin level and flagellation. This Bacillus licheniformis protein is HTH-type transcriptional regulator SinR (sinR).